Consider the following 56-residue polypeptide: Large ribosomal subunit protein bL32 (56 aa).

Residues 1-36 (MAVQQNKKSRSKRGMRRSHDALSTAQLSVDATSGEV) are disordered. A compositionally biased stretch (basic residues) spans 7-16 (KKSRSKRGMR). Residues 21-31 (ALSTAQLSVDA) show a composition bias toward polar residues.

Belongs to the bacterial ribosomal protein bL32 family.

This Shewanella oneidensis (strain ATCC 700550 / JCM 31522 / CIP 106686 / LMG 19005 / NCIMB 14063 / MR-1) protein is Large ribosomal subunit protein bL32.